Consider the following 385-residue polypeptide: Isocitrate dehydrogenase [NAD] subunit beta, mitochondrial (385 aa).

The N-terminal 34 residues, 1 to 34, are a transit peptide targeting the mitochondrion; it reads MAALSGVRWLTRALVSAGNPGAWRGLSTSAAAHA. Lys199 is subject to N6-acetyllysine.

The protein belongs to the isocitrate and isopropylmalate dehydrogenases family. As to quaternary structure, heterooligomer of subunits alpha (IDH3A), beta (IDH3B), and gamma (IDH3G) in the apparent ratio of 2:1:1. The heterodimer containing one IDH3A and one IDH3B subunit and the heterodimer containing one IDH3A and one IDH3G subunit assemble into a heterotetramer (which contains two subunits of IDH3A, one of IDH3B and one of IDH3G) and further into the heterooctamer.

The protein resides in the mitochondrion. The heterotetramer and the heterodimer composed of IDH3A and IDH3G subunits can be allosterically activated by citrate (CIT) or/and ADP, and the two activators can act independently or synergistically. The heterodimer composed of IDH3A and IDH3B subunits cannot be allosterically regulated and the allosteric regulation of the heterotetramer is through the IDH3G subunit and not the IDH3B subunit. The IDH3G subunit contains the allosteric site which consists of a CIT-binding site and an ADP-binding site, and the binding of CIT and ADP causes conformational changes at the allosteric site which are transmitted to the active site in the catalytic subunit (IDH3A) through a cascade of conformational changes at the heterodimer interface, leading to stabilization of the isocitrate-binding at the active site and thus activation of the enzyme. ATP can activate the heterotetramer and the heterodimer composed of IDH3A and IDH3G subunits at low concentrations but inhibits their activities at high concentrations, whereas ATP exhibits only inhibitory effect on the heterodimer composed of IDH3A and IDH3B subunits. Functionally, plays a structural role to facilitate the assembly and ensure the full activity of the enzyme catalyzing the decarboxylation of isocitrate (ICT) into alpha-ketoglutarate. The heterodimer composed of the alpha (IDH3A) and beta (IDH3B) subunits and the heterodimer composed of the alpha (IDH3A) and gamma (IDH3G) subunits, have considerable basal activity but the full activity of the heterotetramer (containing two subunits of IDH3A, one of IDH3B and one of IDH3G) requires the assembly and cooperative function of both heterodimers. In Macaca fascicularis (Crab-eating macaque), this protein is Isocitrate dehydrogenase [NAD] subunit beta, mitochondrial (IDH3B).